The chain runs to 324 residues: Serpentine receptor class delta-30 (324 aa).

Helical transmembrane passes span 5-25 (IIHSVLSTVGVSLNAFMMYLA), 38-58 (AIITIKTGTDILASIMSFFVM), 83-103 (ACYVGHMLMLCFLEYNLIWMI), 124-144 (VFVAFCLSIPSMVHMAAWFSF), 176-196 (ITLITQLFITAFLVVVAYIWI), 227-247 (FQVFLPSFIFLGVITFASMFT), and 258-278 (AISVIFMFSPICSPFSYILFV). Residues 290 to 324 (KQPKPHPEMCGPIRSNTRTTSISVTNNSSHLSSAH) are disordered. Positions 303 to 324 (RSNTRTTSISVTNNSSHLSSAH) are enriched in polar residues.

Belongs to the nematode receptor-like protein srd family.

The protein localises to the membrane. The protein is Serpentine receptor class delta-30 (srd-30) of Caenorhabditis elegans.